Reading from the N-terminus, the 80-residue chain is Conotoxin VnMSGL-0121 (80 aa).

Residues 1–20 (MSGLGIMVLTLLLLVSMATS) form the signal peptide. Residues 21 to 44 (HQDGGGKQATQRDAINVRRRRSIT) constitute a propeptide that is removed on maturation. 3 disulfides stabilise this stretch: C52-C65, C56-C74, and C64-C78. F79 bears the Phenylalanine amide mark.

This sequence belongs to the conotoxin O3 superfamily. Expressed by the venom duct.

The protein resides in the secreted. This is Conotoxin VnMSGL-0121 from Conus ventricosus (Mediterranean cone).